Reading from the N-terminus, the 141-residue chain is Glutamyl-tRNA(Gln) amidotransferase subunit C, chloroplastic/mitochondrial (141 aa).

This sequence belongs to the GatC family. As to quaternary structure, subunit of the heterotrimeric GatCAB amidotransferase (AdT) complex, composed of A, B and C subunits.

The protein localises to the mitochondrion. It is found in the plastid. The protein resides in the chloroplast. It catalyses the reaction L-glutamyl-tRNA(Gln) + L-glutamine + ATP + H2O = L-glutaminyl-tRNA(Gln) + L-glutamate + ADP + phosphate + H(+). Its function is as follows. Allows the formation of correctly charged Gln-tRNA(Gln) through the transamidation of misacylated Glu-tRNA(Gln) in chloroplasts and mitochondria. The reaction takes place in the presence of glutamine and ATP through an activated gamma-phospho-Glu-tRNA(Gln). This is Glutamyl-tRNA(Gln) amidotransferase subunit C, chloroplastic/mitochondrial from Populus trichocarpa (Western balsam poplar).